Reading from the N-terminus, the 360-residue chain is 1-deoxy-D-xylulose 5-phosphate reductoisomerase (360 aa).

NADPH contacts are provided by Ser-7, Gly-8, Ser-9, Ile-10, and Asn-115. Lys-116 contributes to the 1-deoxy-D-xylulose 5-phosphate binding site. NADPH is bound at residue Glu-117. Position 135 (Asp-135) interacts with Mn(2+). Positions 136, 137, 159, and 182 each coordinate 1-deoxy-D-xylulose 5-phosphate. Glu-137 is a binding site for Mn(2+). Gly-188 is a binding site for NADPH. Residues Ser-195, Asn-200, Lys-201, and Glu-204 each coordinate 1-deoxy-D-xylulose 5-phosphate. Glu-204 contributes to the Mn(2+) binding site.

This sequence belongs to the DXR family. Mg(2+) serves as cofactor. Requires Mn(2+) as cofactor.

The enzyme catalyses 2-C-methyl-D-erythritol 4-phosphate + NADP(+) = 1-deoxy-D-xylulose 5-phosphate + NADPH + H(+). It functions in the pathway isoprenoid biosynthesis; isopentenyl diphosphate biosynthesis via DXP pathway; isopentenyl diphosphate from 1-deoxy-D-xylulose 5-phosphate: step 1/6. Functionally, catalyzes the NADPH-dependent rearrangement and reduction of 1-deoxy-D-xylulose-5-phosphate (DXP) to 2-C-methyl-D-erythritol 4-phosphate (MEP). This chain is 1-deoxy-D-xylulose 5-phosphate reductoisomerase, found in Campylobacter fetus subsp. fetus (strain 82-40).